Consider the following 341-residue polypeptide: Delta(1)-pyrroline-2-carboxylate reductase (341 aa).

Serine 47 (charge relay system) is an active-site residue. Histidine 48 serves as the catalytic Proton donor. Arginine 52 lines the substrate pocket. 120 to 124 (HFSAL) contributes to the NADP(+) binding site. Threonine 160 is a substrate binding site. 178–180 (DFA) provides a ligand contact to NADP(+). 186–187 (RG) contributes to the substrate binding site. Glutamate 188 serves as the catalytic Charge relay system. Residues 229 to 230 (HK) and 305 to 311 (RLPSERR) each bind NADP(+).

This sequence belongs to the LDH2/MDH2 oxidoreductase family. Homodimer.

The catalysed reaction is L-proline + NAD(+) = 1-pyrroline-2-carboxylate + NADH + H(+). The enzyme catalyses L-proline + NADP(+) = 1-pyrroline-2-carboxylate + NADPH + H(+). Functionally, catalyzes the reduction of Delta(1)-pyrroline-2-carboxylate (Pyr2C) to L-proline, using NADPH as the electron donor. Is likely involved in a degradation pathway that converts cis- and trans-3-hydroxy-L-proline (c3LHyp and t3LHyp) to L-proline, which would allow S.novella to grow on c3LHyp or t3LHyp as a sole carbon source. The chain is Delta(1)-pyrroline-2-carboxylate reductase from Ancylobacter novellus (strain ATCC 8093 / DSM 506 / JCM 20403 / CCM 1077 / IAM 12100 / NBRC 12443 / NCIMB 10456) (Starkeya novella).